A 701-amino-acid chain; its full sequence is Transcriptional regulator Kaiso (701 aa).

The BTB domain occupies C32 to R94. Disordered regions lie at residues G128–P158 and S181–H311. The span at T245–P258 shows a compositional bias: polar residues. Residues T259–K273 are compositionally biased toward low complexity. Residues V278–H311 are compositionally biased toward polar residues. A required for methylation dependent DNA-binding region spans residues A470–N609. 3 consecutive C2H2-type zinc fingers follow at residues Y501–H523, Y529–H551, and Y557–H580. A required for sequence specific DNA-binding region spans residues H519–Y701. A disordered region spans residues D644–T664. Positions Q652 to T664 are enriched in polar residues.

In terms of assembly, self associates. Interacts with tcf7l1-A, leading to repression of tcf7l1-A target genes. Interacts with ctnnd1, and this interaction may inhibit DNA-binding. Interacts with ncor1.

It localises to the nucleus. Its function is as follows. Transcriptional regulator with bimodal DNA-binding specificity. Binds to methylated CpG dinucleotides in the consensus sequence 5'-CGCG-3' and also binds to the non-methylated consensus sequence 5'-CTGCNA-3'. May recruit the N-CoR repressor complex to promote histone deacetylation and the formation of repressive chromatin structures in target gene promoters. Contributes to the repression of target genes of the Wnt signaling pathway and to the methylation-dependent repression of zygotic transcription prior to the mid-blastula transition (MBT). Also required for gastrulation movements. This chain is Transcriptional regulator Kaiso (zbtb33), found in Xenopus laevis (African clawed frog).